The primary structure comprises 318 residues: Protein-methionine-sulfoxide reductase catalytic subunit MsrP (318 aa).

Residues 1–40 (MKQLMMSDVTPEEIFNQRRQIIKSMGLGIATLGLPNIAFA) constitute a signal peptide (tat-type signal). Mo-molybdopterin is bound by residues Asn72, 75–76 (YE), Cys130, Thr165, Asn217, Arg222, and 233–235 (SIK).

Belongs to the MsrP family. In terms of assembly, heterodimer of a catalytic subunit (MsrP) and a heme-binding subunit (MsrQ). Requires Mo-molybdopterin as cofactor. In terms of processing, predicted to be exported by the Tat system. The position of the signal peptide cleavage has not been experimentally proven.

The protein localises to the periplasm. The enzyme catalyses L-methionyl-[protein] + a quinone + H2O = L-methionyl-(S)-S-oxide-[protein] + a quinol. It catalyses the reaction L-methionyl-[protein] + a quinone + H2O = L-methionyl-(R)-S-oxide-[protein] + a quinol. Functionally, part of the MsrPQ system that repairs oxidized periplasmic proteins containing methionine sulfoxide residues (Met-O), using respiratory chain electrons. Thus protects these proteins from oxidative-stress damage caused by reactive species of oxygen and chlorine generated by the host defense mechanisms. MsrPQ is essential for the maintenance of envelope integrity under bleach stress, rescuing a wide series of structurally unrelated periplasmic proteins from methionine oxidation. The catalytic subunit MsrP is non-stereospecific, being able to reduce both (R-) and (S-) diastereoisomers of methionine sulfoxide. The polypeptide is Protein-methionine-sulfoxide reductase catalytic subunit MsrP (Haemophilus ducreyi (strain 35000HP / ATCC 700724)).